The primary structure comprises 283 residues: Bifunctional protein FolD (283 aa).

NADP(+) contacts are provided by residues 163 to 165 (GRS), Ser-188, and Ile-229.

It belongs to the tetrahydrofolate dehydrogenase/cyclohydrolase family. As to quaternary structure, homodimer.

The enzyme catalyses (6R)-5,10-methylene-5,6,7,8-tetrahydrofolate + NADP(+) = (6R)-5,10-methenyltetrahydrofolate + NADPH. The catalysed reaction is (6R)-5,10-methenyltetrahydrofolate + H2O = (6R)-10-formyltetrahydrofolate + H(+). It functions in the pathway one-carbon metabolism; tetrahydrofolate interconversion. Functionally, catalyzes the oxidation of 5,10-methylenetetrahydrofolate to 5,10-methenyltetrahydrofolate and then the hydrolysis of 5,10-methenyltetrahydrofolate to 10-formyltetrahydrofolate. In Campylobacter fetus subsp. fetus (strain 82-40), this protein is Bifunctional protein FolD.